A 55-amino-acid polypeptide reads, in one-letter code: ATP synthase F(0) complex subunit 8 (55 aa).

The chain crosses the membrane as a helical span at residues 9-29 (WFAIMVFSWFVFLIFLPPKIM).

The protein belongs to the ATPase protein 8 family. Component of the ATP synthase complex composed at least of ATP5F1A/subunit alpha, ATP5F1B/subunit beta, ATP5MC1/subunit c (homooctomer), MT-ATP6/subunit a, MT-ATP8/subunit 8, ATP5ME/subunit e, ATP5MF/subunit f, ATP5MG/subunit g, ATP5MK/subunit k, ATP5MJ/subunit j, ATP5F1C/subunit gamma, ATP5F1D/subunit delta, ATP5F1E/subunit epsilon, ATP5PF/subunit F6, ATP5PB/subunit b, ATP5PD/subunit d, ATP5PO/subunit OSCP. ATP synthase complex consists of a soluble F(1) head domain (subunits alpha(3) and beta(3)) - the catalytic core - and a membrane F(0) domain - the membrane proton channel (subunits c, a, 8, e, f, g, k and j). These two domains are linked by a central stalk (subunits gamma, delta, and epsilon) rotating inside the F1 region and a stationary peripheral stalk (subunits F6, b, d, and OSCP).

The protein localises to the mitochondrion membrane. Its function is as follows. Subunit 8, of the mitochondrial membrane ATP synthase complex (F(1)F(0) ATP synthase or Complex V) that produces ATP from ADP in the presence of a proton gradient across the membrane which is generated by electron transport complexes of the respiratory chain. ATP synthase complex consist of a soluble F(1) head domain - the catalytic core - and a membrane F(1) domain - the membrane proton channel. These two domains are linked by a central stalk rotating inside the F(1) region and a stationary peripheral stalk. During catalysis, ATP synthesis in the catalytic domain of F(1) is coupled via a rotary mechanism of the central stalk subunits to proton translocation. In vivo, can only synthesize ATP although its ATP hydrolase activity can be activated artificially in vitro. Part of the complex F(0) domain. The polypeptide is ATP synthase F(0) complex subunit 8 (Tetraodon nigroviridis (Spotted green pufferfish)).